We begin with the raw amino-acid sequence, 386 residues long: Putative prophage major tail sheath protein (386 aa).

Belongs to the myoviridae tail sheath protein family.

Its subcellular location is the secreted. The protein is Putative prophage major tail sheath protein of Pseudomonas aeruginosa (strain UCBPP-PA14).